Consider the following 236-residue polypeptide: Leucyl/phenylalanyl-tRNA--protein transferase (236 aa).

This sequence belongs to the L/F-transferase family.

Its subcellular location is the cytoplasm. The catalysed reaction is N-terminal L-lysyl-[protein] + L-leucyl-tRNA(Leu) = N-terminal L-leucyl-L-lysyl-[protein] + tRNA(Leu) + H(+). It carries out the reaction N-terminal L-arginyl-[protein] + L-leucyl-tRNA(Leu) = N-terminal L-leucyl-L-arginyl-[protein] + tRNA(Leu) + H(+). The enzyme catalyses L-phenylalanyl-tRNA(Phe) + an N-terminal L-alpha-aminoacyl-[protein] = an N-terminal L-phenylalanyl-L-alpha-aminoacyl-[protein] + tRNA(Phe). Its function is as follows. Functions in the N-end rule pathway of protein degradation where it conjugates Leu, Phe and, less efficiently, Met from aminoacyl-tRNAs to the N-termini of proteins containing an N-terminal arginine or lysine. The chain is Leucyl/phenylalanyl-tRNA--protein transferase from Shewanella sediminis (strain HAW-EB3).